We begin with the raw amino-acid sequence, 1529 residues long: ABC multidrug transporter AFR2 (1529 aa).

Over residues 1–10 the composition is skewed to gly residues; it reads MAFAGVGQGL. The disordered stretch occupies residues 1 to 21; the sequence is MAFAGVGQGLGTYDRTEQTSG. The ABC transporter 1 domain maps to 144–394; sequence GALRDLISNR…FVDMGFHCPS (251 aa). N-linked (GlcNAc...) asparagine glycosylation is found at N235 and N318. Helical transmembrane passes span 505-525, 539-559, 589-609, 614-634, and 648-668; these read LTLT…SVFY, ALLF…ILIL, IPYK…MTNL, GPYF…SMLF, and LAPA…AVNV. Residue N742 is glycosylated (N-linked (GlcNAc...) asparagine). The chain crosses the membrane as a helical span at residues 757-777; it reads GILIGFFLFFTAIYMTATEFI. The region spanning 845-1087 is the ABC transporter 2 domain; it reads FSWKDVVYDI…ILIDYFEKNG (243 aa). An ATP-binding site is contributed by 881-888; it reads GVSGAGKT. Transmembrane regions (helical) follow at residues 1193–1213, 1227–1247, 1268–1288, 1314–1334, and 1353–1373; these read YIWS…FSFF, FSVF…MPNF, IFIL…GAVI, LMFL…IMIV, and MCLI…FWMF. N1434 is a glycosylation site (N-linked (GlcNAc...) asparagine). Residues 1465-1485 traverse the membrane as a helical segment; it reads FGLLWAYVVFNIIAAVGIYWL. The tract at residues 1493–1529 is disordered; the sequence is GKEQASEPEGVQEKLVPAQSSEKKRESVSRGSESTAA.

Belongs to the ABC transporter superfamily. ABCG family. PDR (TC 3.A.1.205) subfamily.

It localises to the cell membrane. The enzyme catalyses itraconazole(in) + ATP + H2O = itraconazole(out) + ADP + phosphate + H(+). It carries out the reaction voriconazole(in) + ATP + H2O = voriconazole(out) + ADP + phosphate + H(+). The catalysed reaction is fluconazole(in) + ATP + H2O = fluconazole(out) + ADP + phosphate + H(+). Functionally, pleiotropic ABC efflux transporter that confers resistance to structurally and functionally unrelated compounds including azoles such as fluconazole (FLC), itraconazole (ITC), posaconazole (POS), and voriconazole (VRC). In Cryptococcus neoformans var. grubii serotype A (strain H99 / ATCC 208821 / CBS 10515 / FGSC 9487) (Filobasidiella neoformans var. grubii), this protein is ABC multidrug transporter AFR2.